Consider the following 531-residue polypeptide: uncharacterized protein (531 aa).

A signal peptide spans 1–22 (MRLQFKLLGFLTLLGTSTILSA). Cys23 carries the N-palmitoyl cysteine lipid modification. A lipid anchor (S-diacylglycerol cysteine) is attached at Cys23. The tract at residues 31–51 (EPNNIEESGPITPTTPTTDVP) is disordered. Low complexity predominate over residues 40–51 (PITPTTPTTDVP).

Belongs to the MG067/MG068/MG395 family.

The protein resides in the cell membrane. This is an uncharacterized protein from Mycoplasma pneumoniae (strain ATCC 29342 / M129 / Subtype 1) (Mycoplasmoides pneumoniae).